Reading from the N-terminus, the 78-residue chain is Large ribosomal subunit protein bL28 (78 aa).

The tract at residues 1-21 is disordered; sequence MSRVCQVTGKRPMSGNNRSHA.

Belongs to the bacterial ribosomal protein bL28 family.

This is Large ribosomal subunit protein bL28 from Photorhabdus laumondii subsp. laumondii (strain DSM 15139 / CIP 105565 / TT01) (Photorhabdus luminescens subsp. laumondii).